A 245-amino-acid polypeptide reads, in one-letter code: Probable phosphatase YcdX (245 aa).

Zn(2+)-binding residues include H7, H9, H15, H40, E73, H101, H131, D192, and H194.

This sequence belongs to the PHP family. As to quaternary structure, homotrimer. Requires Zn(2+) as cofactor.

The polypeptide is Probable phosphatase YcdX (Escherichia coli O17:K52:H18 (strain UMN026 / ExPEC)).